We begin with the raw amino-acid sequence, 320 residues long: Transcription factor bHLH96 (320 aa).

A disordered region spans residues Glu-30 to Glu-121. Acidic residues predominate over residues Tyr-65–Leu-76. The span at Gly-104–Ser-114 shows a compositional bias: basic residues. A bHLH domain is found at Asn-122–Leu-173. Residues Val-184 to Ser-206 form a disordered region. The ACT domain maps to Ser-244–Ser-320.

Homodimer. As to expression, expressed constitutively in roots, leaves, stems, and flowers.

Its subcellular location is the nucleus. The protein is Transcription factor bHLH96 (BHLH96) of Arabidopsis thaliana (Mouse-ear cress).